Here is a 556-residue protein sequence, read N- to C-terminus: MLRSAAITKGTQRSPNRAMLRAVGFGDEDFNKPIIGIANGYSTITPCNIGLNDLARRSEEAARQAGAMPQMFGTITVSDGISMGTEGMKYSLVSREVIADSIETACNAQSMDGVLAIGGCDKNMPGAMIALARMNIPGVFVYGGTIKPGKLADRDLTVVSAFEAVGQHASGKINEEQLTAIEKNACPGAGSCGGMFTANTMSAAIETLGLSLPYSSTMAAEDEEKANSAARSAEVLVDAIKANICPLDLLTKNAFENAISVVMAVGGSTNAVLHLLAIARSAGVDLCIDDFERIRQRVPVICDLKPSGRYVTVDLHKAGGIPQVMKQLLDAGLLHGDCCNVEGKTLRELLKDVPSEPSAEQDVIHPLSKPVYAKGHLAILKGNLASEGCVAKISGIKTPVLTGPARVFESEEACLAAILNNKVKAGDVVVIRNEGPVGGPGMREMLAPTSAIVGADLGDKVALITDGRFSGGTYGLVVGHVAPEAAVGGMIGLVHEGDSITIDADQLLIQLNIENDELERRSSAWKKPQPRYQTGVLGKYARMVSSSSKGAVTDQP.

Position 47 (C47) interacts with [2Fe-2S] cluster. A Mg(2+)-binding site is contributed by D79. Residue C120 coordinates [2Fe-2S] cluster. Mg(2+) contacts are provided by D121 and K122. K122 is modified (N6-carboxylysine). Residue C192 participates in [2Fe-2S] cluster binding. E444 contacts Mg(2+). The Proton acceptor role is filled by S470.

The protein belongs to the IlvD/Edd family. Homodimer. It depends on [2Fe-2S] cluster as a cofactor. Mg(2+) is required as a cofactor.

The catalysed reaction is (2R)-2,3-dihydroxy-3-methylbutanoate = 3-methyl-2-oxobutanoate + H2O. It carries out the reaction (2R,3R)-2,3-dihydroxy-3-methylpentanoate = (S)-3-methyl-2-oxopentanoate + H2O. It functions in the pathway amino-acid biosynthesis; L-isoleucine biosynthesis; L-isoleucine from 2-oxobutanoate: step 3/4. It participates in amino-acid biosynthesis; L-valine biosynthesis; L-valine from pyruvate: step 3/4. In terms of biological role, functions in the biosynthesis of branched-chain amino acids. Catalyzes the dehydration of (2R,3R)-2,3-dihydroxy-3-methylpentanoate (2,3-dihydroxy-3-methylvalerate) into 2-oxo-3-methylpentanoate (2-oxo-3-methylvalerate) and of (2R)-2,3-dihydroxy-3-methylbutanoate (2,3-dihydroxyisovalerate) into 2-oxo-3-methylbutanoate (2-oxoisovalerate), the penultimate precursor to L-isoleucine and L-valine, respectively. This Prochlorococcus marinus (strain MIT 9303) protein is Dihydroxy-acid dehydratase.